Here is a 405-residue protein sequence, read N- to C-terminus: Histidine decarboxylase (405 aa).

His-121 contributes to the substrate binding site. Lys-234 carries the post-translational modification N6-(pyridoxal phosphate)lysine.

It belongs to the group II decarboxylase family. As to quaternary structure, homotetramer. Pyridoxal 5'-phosphate serves as cofactor.

The enzyme catalyses L-histidine + H(+) = histamine + CO2. It functions in the pathway siderophore biosynthesis; pseudomonine biosynthesis. In Pseudomonas fluorescens, this protein is Histidine decarboxylase.